The primary structure comprises 304 residues: Putative S-adenosyl-L-methionine-dependent methyltransferase MUL_0816 (304 aa).

S-adenosyl-L-methionine is bound by residues aspartate 130 and 159 to 160 (DL).

Belongs to the UPF0677 family.

Functionally, exhibits S-adenosyl-L-methionine-dependent methyltransferase activity. The polypeptide is Putative S-adenosyl-L-methionine-dependent methyltransferase MUL_0816 (Mycobacterium ulcerans (strain Agy99)).